Reading from the N-terminus, the 276-residue chain is Undecaprenyl-diphosphatase (276 aa).

A run of 5 helical transmembrane segments spans residues 84 to 104 (YRLG…GLLF), 115 to 135 (LWVV…AEYL), 188 to 208 (FGFL…LPDA), 222 to 242 (QLLV…SWFL), and 250 to 270 (MYWF…LLAT).

Belongs to the UppP family.

Its subcellular location is the cell membrane. It carries out the reaction di-trans,octa-cis-undecaprenyl diphosphate + H2O = di-trans,octa-cis-undecaprenyl phosphate + phosphate + H(+). In terms of biological role, catalyzes the dephosphorylation of undecaprenyl diphosphate (UPP). Confers resistance to bacitracin. This chain is Undecaprenyl-diphosphatase, found in Mycobacterium ulcerans (strain Agy99).